A 274-amino-acid polypeptide reads, in one-letter code: Long chain fatty acid elongase 5 (274 aa).

The Extracellular portion of the chain corresponds to 1–23; sequence MMDQILGTNFTYEGAKEVARGLE. The helical transmembrane segment at 24 to 44 threads the bilayer; that stretch reads GFSAKLAVGYIATIFGLKYYM. The Cytoplasmic portion of the chain corresponds to 45 to 61; the sequence is KDRKAFDLSTPLNIWNG. The chain crosses the membrane as a helical span at residues 62 to 82; it reads ILSTFSLLGFLFTFPTLLSVI. The Extracellular portion of the chain corresponds to 83–105; sequence RKDGFSHTYSHVSELYTDSTSGY. The helical transmembrane segment at 106–126 threads the bilayer; sequence WIFLWVISKIPELLDTVFIVL. The Cytoplasmic portion of the chain corresponds to 127-129; it reads RKR. A helical membrane pass occupies residues 130-150; sequence PLIFMHWYHHALTGYYALVCY. Topologically, residues 151-156 are extracellular; that stretch reads HEDAVH. The helical transmembrane segment at 157–177 threads the bilayer; that stretch reads MVWVVWMNYIIHAFMYGYYLL. At 178-187 the chain is on the cytoplasmic side; the sequence is KSLKVPIPPS. A helical membrane pass occupies residues 188-208; the sequence is VAQAITTSQMVQFAVAIFAQV. Topologically, residues 209–227 are extracellular; the sequence is HVSYKHYVEGVEGLAYSFR. A helical membrane pass occupies residues 228–248; the sequence is GTAIGFFMLTTYFYLWIQFYK. Residues 249–274 are Cytoplasmic-facing; that stretch reads EHYLKNGGKKYNLAKDQAKTQTKKAN.

It belongs to the ELO family. In terms of tissue distribution, expressed in the gut and unidentified head cells.

Its subcellular location is the membrane. It catalyses the reaction 11-methyldodecanoyl-CoA + malonyl-CoA + H(+) = 3-oxoisopentadecanoyl-CoA + CO2 + CoA. The enzyme catalyses isopentadecanoyl-CoA + malonyl-CoA + H(+) = 3-oxoisoheptadecanoyl-CoA + CO2 + CoA. The protein operates within lipid metabolism; fatty acid biosynthesis. Functionally, catalyzes the first and rate-limiting reaction of the four reactions that constitute the long-chain fatty acids elongation cycle. Uses malonyl-CoA to add 2 carbons per cycle to the chain of long-chain fatty acids. Condensing enzyme required for the formation of isopentadecanoate (C15iso) and isoheptadecanoate (C17iso), both play critical roles in animal development and growth. The polypeptide is Long chain fatty acid elongase 5 (Caenorhabditis elegans).